Reading from the N-terminus, the 528-residue chain is MDKANDYLKDYQPAKLVLATAGITAASILAYQAITDRDFKDKLNKKIFRSIKSMPGVSDIVKKERAKAKVELKKMFKTDVRNAHYTLPLKGIKHEDLIEEMKALAKVDESHWVDSKVSGCVYLGEKEHTKLLNEAYSLFSLSNPLHPSVFPSIRKFETESISMVSNMLNAHSKVVGSLTSGGTESIFMAVKAYRDFYKDRTDRPEIVVPVTIHAAFDKACEYLKIRIVHIDVDPVSYKVDMAAMKKAINKDTILVAGSAVNFPHGIIDPIDEIAKLAQQYDIGCHVDACLGGFILPFAEKLDYDIPVFDFRIPGVTSMSVDTHKFGYAAKGTSVVLFGNKKLRRAMYFVAPNWPGGIYASPTLPGSRPGGLVAACWASLVSMGNDGFLEKAKGVMETTKKIIKGLQSINGVKIIGDPKAMVVAFTCDNIFYVNDYMSKKGWHLNALQRPNSLHVCVTAKMIGMESLFIEDLKDSIKLVKDNSGSLPKDGTAPIYGSAHSVPDREMVGTILSDFIDELITPDYKPSQST.

A helical membrane pass occupies residues 13–35 (PAKLVLATAGITAASILAYQAIT). Position 324 is an N6-(pyridoxal phosphate)lysine (K324).

The protein belongs to the group II decarboxylase family. Sphingosine-1-phosphate lyase subfamily. Pyridoxal 5'-phosphate serves as cofactor.

It localises to the endoplasmic reticulum membrane. The catalysed reaction is sphinganine 1-phosphate = hexadecanal + phosphoethanolamine. It participates in lipid metabolism; sphingolipid metabolism. Cleaves phosphorylated sphingoid bases (PSBs), such as sphingosine-1-phosphate, into fatty aldehydes and phosphoethanolamine. Sphingosine-1-phosphate (S1P) probably acts intracellularly as a second messenger perhaps by promoting cell proliferation; the absence of S1P lyase increases its concentration. This leads to increased lateral pseudopod formation as well as defects in the efficiency of chemotaxis. Overexpression of S1P lyase causes decreased growth rates, entry into stationary phase at lower cell density and increased sensitivity to the antitumor agents cisplatin and carboplatin; these effects are more pronounced in cells that express more enzyme. In Dictyostelium discoideum (Social amoeba), this protein is Sphingosine-1-phosphate lyase (sglA).